We begin with the raw amino-acid sequence, 351 residues long: Quinolinate phosphoribosyltransferase [decarboxylating] 2b, mitochondrial (351 aa).

Substrate is bound by residues Arg142, 173–175, Arg197, Lys207, Glu240, Asp267, 299–301, and 320–322; these read TRK, SGN, and SGA.

The protein belongs to the NadC/ModD family. In terms of tissue distribution, expressed in roots and flowers.

The protein resides in the mitochondrion. It carries out the reaction nicotinate beta-D-ribonucleotide + CO2 + diphosphate = quinolinate + 5-phospho-alpha-D-ribose 1-diphosphate + 2 H(+). It participates in alkaloid biosynthesis; nicotine biosynthesis. The protein operates within cofactor biosynthesis; NAD(+) biosynthesis; nicotinate D-ribonucleotide from quinolinate: step 1/1. In terms of biological role, involved in the biosynthesis of pyridine alkaloid natural products, leading mainly to the production of anabasine, anatabine, nicotine and nornicotine, effective deterrents against herbivores with antiparasitic and pesticide properties (neurotoxins); nornicotine serves as the precursor in the synthesis of the carcinogen compound N'-nitrosonornicotine (NNN). Involved in the catabolism of quinolinic acid (QA). The polypeptide is Quinolinate phosphoribosyltransferase [decarboxylating] 2b, mitochondrial (Nicotiana tabacum (Common tobacco)).